Here is a 256-residue protein sequence, read N- to C-terminus: Chalcone--flavanone isomerase (256 aa).

Residues Thr51, Asn116, and Ser193 each contribute to the substrate site. Residues 219–256 form a disordered region; the sequence is NSTTDLNESENEKLNSNEVSKEEKPLQVEKSAFKEVEV. Positions 228–256 are enriched in basic and acidic residues; the sequence is ENEKLNSNEVSKEEKPLQVEKSAFKEVEV.

Belongs to the chalcone isomerase family. As to expression, nodules.

The enzyme catalyses a chalcone = a flavanone.. It functions in the pathway secondary metabolite biosynthesis; flavonoid biosynthesis. Functionally, catalyzes the intramolecular cyclization of bicyclic chalcones into tricyclic (S)-flavanones. Responsible for the isomerization of 4,2',4',6'-tetrahydroxychalcone (also termed chalcone) into naringenin. This Elaeagnus umbellata (Autumn olive) protein is Chalcone--flavanone isomerase (CHI).